Consider the following 540-residue polypeptide: Beta-2-syntrophin (540 aa).

The tract at residues 73–114 is disordered; sequence LPNGGGAGDSLPGSPSRGLGPPSPPAPPRGPAGEAGASPPVR. Low complexity predominate over residues 81 to 92; sequence DSLPGSPSRGLG. The span at 93–102 shows a compositional bias: pro residues; that stretch reads PPSPPAPPRG. Phosphoserine is present on residues Ser95, Ser110, Ser129, Ser211, Ser222, Ser233, Ser393, and Ser395. Over residues 103–112 the composition is skewed to low complexity; sequence PAGEAGASPP. The PDZ domain occupies 115–198; sequence RVRVVKQEAG…EVLLEVKFIR (84 aa). PH domains are found at residues 163-300 and 325-437; these read ILSV…TNIM and EVKH…QGCH. The disordered stretch occupies residues 220 to 240; it reads PQSPSFSGSEDSGSPKHQNST. Low complexity predominate over residues 222–231; it reads SPSFSGSEDS. Positions 484–540 constitute an SU domain; it reads PFERLKMSADDGIRNLYLDFGGPEGELTMDLHSCPKPIVFVLHTFLSAKVTRMGLLV. The segment at 518 to 540 is calmodulin-binding; that stretch reads PKPIVFVLHTFLSAKVTRMGLLV.

The protein belongs to the syntrophin family. Monomer and homodimer. Interacts with the other members of the syntrophin family: SNTA1 and SNTB1; and with the sodium channel proteins SCN4A and SCN5A. Interacts with SAST, MAST205, microtubules and microtubule-associated proteins. Interacts with the dystrophin protein DMD and related proteins DTNA and UTRN, and with the neuroregulin receptor ERBB4. Interacts with PTPRN when phosphorylated, protecting PTPRN from protein cleavage by CAPN1. Dephosphorylation upon insulin stimulation disrupts the interaction with PTPRN and results in the cleavage of PTPRN. Interacts with DTNB. Phosphorylated. Partially dephosphorylated upon insulin stimulation. In terms of tissue distribution, ubiquitous. Isoform 1 is the predominant isoform. Weak level of isoform 2 is present in all tested tissues, except in liver and heart where it is highly expressed.

The protein localises to the membrane. It is found in the cytoplasmic vesicle. It localises to the secretory vesicle membrane. Its subcellular location is the cell junction. The protein resides in the cytoplasm. The protein localises to the cytoskeleton. Its function is as follows. Adapter protein that binds to and probably organizes the subcellular localization of a variety of membrane proteins. May link various receptors to the actin cytoskeleton and the dystrophin glycoprotein complex. May play a role in the regulation of secretory granules via its interaction with PTPRN. The polypeptide is Beta-2-syntrophin (SNTB2) (Homo sapiens (Human)).